We begin with the raw amino-acid sequence, 318 residues long: Annexin D6 (318 aa).

An N-acetylalanine modification is found at alanine 2. Annexin repeat units lie at residues proline 11 to leucine 82, aspartate 83 to serine 154, lysine 168 to lysine 239, and tyrosine 243 to glycine 314. Ca(2+) is bound by residues phenylalanine 24, glycine 26, glycine 28, and glutamate 68. Serine 95 is subject to Phosphoserine. A phosphothreonine mark is found at threonine 100 and threonine 112. Tyrosine 129 bears the Phosphotyrosine mark. Ca(2+) contacts are provided by isoleucine 256, arginine 258, and glycine 260. Tyrosine 285 is modified (phosphotyrosine). At serine 290 the chain carries Phosphoserine. Ca(2+)-binding residues include aspartate 300 and threonine 301.

It belongs to the annexin (TC 1.A.31.1) family. In terms of tissue distribution, expressed in flowers.

This is Annexin D6 (ANN6) from Arabidopsis thaliana (Mouse-ear cress).